The chain runs to 267 residues: Membrane-spanning 4-domains subfamily A member 10 (267 aa).

Topologically, residues 1–56 are cytoplasmic; that stretch reads MAGQAPTAVPGSVTGEVSRWQNLGPAQPAQKVAQPQNLVPDGHLEKALEGSDLLQK. A helical membrane pass occupies residues 57–77; it reads LGGFHIAIAFAHLAFGGYLIS. Residues 78–83 are Extracellular-facing; sequence TVKNLH. The helical transmembrane segment at 84-104 threads the bilayer; sequence LVVLKCWYPLWGTVSFLVAGM. Residues 105–118 lie on the Cytoplasmic side of the membrane; sequence AAMTTVTFPKTSLK. Residues 119–139 traverse the membrane as a helical segment; it reads VLCVIANVISLFCALAGFFVI. Topologically, residues 140 to 168 are extracellular; that stretch reads AKDLFLEGPFPWPIWRPYPEPTTYIQRLE. The chain crosses the membrane as a helical span at residues 169 to 189; the sequence is LTLFCFTFLEIFLSGSTAITA. Topologically, residues 190-267 are cytoplasmic; that stretch reads YRMKRLQAED…LHTGPRTLRK (78 aa).

This sequence belongs to the MS4A family. In terms of tissue distribution, expressed in thymus, kidney, colon, brain and testis. Expressed also by various hematopoietic and lymphoblastoid cell lines.

Its subcellular location is the membrane. Its function is as follows. May be involved in signal transduction as a component of a multimeric receptor complex. The polypeptide is Membrane-spanning 4-domains subfamily A member 10 (Ms4a10) (Mus musculus (Mouse)).